The following is a 420-amino-acid chain: Tyrosine--tRNA ligase 2 (420 aa).

Residue Y34 coordinates L-tyrosine. A 'HIGH' region motif is present at residues 39-48 (PTGDSMHIGH). 2 residues coordinate L-tyrosine: Y168 and Q172. The short motif at 230–234 (KFGKS) is the 'KMSKS' region element. Residue K233 participates in ATP binding. The S4 RNA-binding domain maps to 352-418 (KNIVEWLVDL…GKKNYSLVKL (67 aa)).

Belongs to the class-I aminoacyl-tRNA synthetase family. TyrS type 1 subfamily. As to quaternary structure, homodimer.

It localises to the cytoplasm. It catalyses the reaction tRNA(Tyr) + L-tyrosine + ATP = L-tyrosyl-tRNA(Tyr) + AMP + diphosphate + H(+). Functionally, catalyzes the attachment of tyrosine to tRNA(Tyr) in a two-step reaction: tyrosine is first activated by ATP to form Tyr-AMP and then transferred to the acceptor end of tRNA(Tyr). This is Tyrosine--tRNA ligase 2 from Bacillus cereus (strain ATCC 14579 / DSM 31 / CCUG 7414 / JCM 2152 / NBRC 15305 / NCIMB 9373 / NCTC 2599 / NRRL B-3711).